We begin with the raw amino-acid sequence, 180 residues long: Signal peptidase complex subunit 3 (180 aa).

The Cytoplasmic portion of the chain corresponds to 1-12 (MHNLLSRANSLL). The chain crosses the membrane as a helical; Signal-anchor for type II membrane protein span at residues 13–33 (AFTLWVMAAVTAACFLSTVFL). Residues 34-180 (DYTVSNHLEV…PTTYTTTRRS (147 aa)) are Lumenal-facing. A glycan (N-linked (GlcNAc...) asparagine) is linked at Asn-141.

The protein belongs to the SPCS3 family. Component of the signal peptidase complex (SPC) composed of a catalytic subunit sec-11 and three accessory subunits spcs-1, spcs-2 and spcs-3. The complex induces a local thinning of the ER membrane which is used to measure the length of the signal peptide (SP) h-region of protein substrates. This ensures the selectivity of the complex towards h-regions shorter than 18-20 amino acids.

The protein resides in the endoplasmic reticulum membrane. Essential component of the signal peptidase complex (SPC) which catalyzes the cleavage of N-terminal signal sequences from nascent proteins as they are translocated into the lumen of the endoplasmic reticulum. Essential for the SPC catalytic activity, possibly by stabilizing and positioning the active center of the complex close to the lumenal surface. The sequence is that of Signal peptidase complex subunit 3 from Caenorhabditis briggsae.